The primary structure comprises 180 residues: Large ribosomal subunit protein uL6 (180 aa).

It belongs to the universal ribosomal protein uL6 family. Part of the 50S ribosomal subunit.

This protein binds to the 23S rRNA, and is important in its secondary structure. It is located near the subunit interface in the base of the L7/L12 stalk, and near the tRNA binding site of the peptidyltransferase center. The chain is Large ribosomal subunit protein uL6 from Bdellovibrio bacteriovorus (strain ATCC 15356 / DSM 50701 / NCIMB 9529 / HD100).